The following is a 435-amino-acid chain: Serine--tRNA ligase (435 aa).

239 to 241 (TAE) contacts L-serine. Position 270–272 (270–272 (RAE)) interacts with ATP. E293 lines the L-serine pocket. An ATP-binding site is contributed by 357 to 360 (EISS). S393 provides a ligand contact to L-serine.

The protein belongs to the class-II aminoacyl-tRNA synthetase family. Type-1 seryl-tRNA synthetase subfamily. As to quaternary structure, homodimer. The tRNA molecule binds across the dimer.

Its subcellular location is the cytoplasm. The catalysed reaction is tRNA(Ser) + L-serine + ATP = L-seryl-tRNA(Ser) + AMP + diphosphate + H(+). The enzyme catalyses tRNA(Sec) + L-serine + ATP = L-seryl-tRNA(Sec) + AMP + diphosphate + H(+). Its pathway is aminoacyl-tRNA biosynthesis; selenocysteinyl-tRNA(Sec) biosynthesis; L-seryl-tRNA(Sec) from L-serine and tRNA(Sec): step 1/1. Its function is as follows. Catalyzes the attachment of serine to tRNA(Ser). Is also able to aminoacylate tRNA(Sec) with serine, to form the misacylated tRNA L-seryl-tRNA(Sec), which will be further converted into selenocysteinyl-tRNA(Sec). The protein is Serine--tRNA ligase of Parvibaculum lavamentivorans (strain DS-1 / DSM 13023 / NCIMB 13966).